We begin with the raw amino-acid sequence, 100 residues long: Urease subunit gamma (100 aa).

This sequence belongs to the urease gamma subunit family. Heterotrimer of UreA (gamma), UreB (beta) and UreC (alpha) subunits. Three heterotrimers associate to form the active enzyme.

It localises to the cytoplasm. It catalyses the reaction urea + 2 H2O + H(+) = hydrogencarbonate + 2 NH4(+). The protein operates within nitrogen metabolism; urea degradation; CO(2) and NH(3) from urea (urease route): step 1/1. The sequence is that of Urease subunit gamma from Mycobacterium bovis (strain ATCC BAA-935 / AF2122/97).